The sequence spans 185 residues: Elongation factor P (185 aa).

This sequence belongs to the elongation factor P family.

It localises to the cytoplasm. It participates in protein biosynthesis; polypeptide chain elongation. Involved in peptide bond synthesis. Stimulates efficient translation and peptide-bond synthesis on native or reconstituted 70S ribosomes in vitro. Probably functions indirectly by altering the affinity of the ribosome for aminoacyl-tRNA, thus increasing their reactivity as acceptors for peptidyl transferase. This chain is Elongation factor P, found in Desulfitobacterium hafniense (strain Y51).